The following is a 130-amino-acid chain: Leptin receptor gene-related protein (130 aa).

Helical transmembrane passes span 7-27 (LVALSFSGALGLTFLLLGCAL), 32-52 (QYWPMFVLIFYILSPIPNLIA), 68-88 (LAYFLTTGIVVSAYGLPVVLA), and 99-119 (GLVMAGNCVIFLTILGFFLIF).

Belongs to the OB-RGRP/VPS55 family.

It is found in the golgi apparatus membrane. Its subcellular location is the endosome membrane. Involved in protein trafficking. May be involved in the down-regulation of membrane protein levels. This Danio rerio (Zebrafish) protein is Leptin receptor gene-related protein (leprot).